The sequence spans 287 residues: Phosphatidylserine decarboxylase proenzyme (287 aa).

Catalysis depends on charge relay system; for autoendoproteolytic cleavage activity residues Asp89, His146, and Ser252. Ser252 serves as the catalytic Schiff-base intermediate with substrate; via pyruvic acid; for decarboxylase activity. Ser252 carries the pyruvic acid (Ser); by autocatalysis modification.

Belongs to the phosphatidylserine decarboxylase family. PSD-B subfamily. Prokaryotic type I sub-subfamily. In terms of assembly, heterodimer of a large membrane-associated beta subunit and a small pyruvoyl-containing alpha subunit. Pyruvate serves as cofactor. Post-translationally, is synthesized initially as an inactive proenzyme. Formation of the active enzyme involves a self-maturation process in which the active site pyruvoyl group is generated from an internal serine residue via an autocatalytic post-translational modification. Two non-identical subunits are generated from the proenzyme in this reaction, and the pyruvate is formed at the N-terminus of the alpha chain, which is derived from the carboxyl end of the proenzyme. The autoendoproteolytic cleavage occurs by a canonical serine protease mechanism, in which the side chain hydroxyl group of the serine supplies its oxygen atom to form the C-terminus of the beta chain, while the remainder of the serine residue undergoes an oxidative deamination to produce ammonia and the pyruvoyl prosthetic group on the alpha chain. During this reaction, the Ser that is part of the protease active site of the proenzyme becomes the pyruvoyl prosthetic group, which constitutes an essential element of the active site of the mature decarboxylase.

The protein localises to the cell membrane. It carries out the reaction a 1,2-diacyl-sn-glycero-3-phospho-L-serine + H(+) = a 1,2-diacyl-sn-glycero-3-phosphoethanolamine + CO2. It functions in the pathway phospholipid metabolism; phosphatidylethanolamine biosynthesis; phosphatidylethanolamine from CDP-diacylglycerol: step 2/2. Catalyzes the formation of phosphatidylethanolamine (PtdEtn) from phosphatidylserine (PtdSer). This is Phosphatidylserine decarboxylase proenzyme from Shewanella halifaxensis (strain HAW-EB4).